The sequence spans 517 residues: Ribose import ATP-binding protein RbsA 2 (517 aa).

2 ABC transporter domains span residues 11-251 (LEMR…VGRD) and 263-507 (YDPG…ALAT). ATP is bound at residue 43–50 (GENGAGKS).

The protein belongs to the ABC transporter superfamily. Ribose importer (TC 3.A.1.2.1) family. In terms of assembly, the complex is composed of an ATP-binding protein (RbsA), two transmembrane proteins (RbsC) and a solute-binding protein (RbsB).

The protein resides in the cell inner membrane. The enzyme catalyses D-ribose(out) + ATP + H2O = D-ribose(in) + ADP + phosphate + H(+). Part of the ABC transporter complex RbsABC involved in ribose import. Responsible for energy coupling to the transport system. This is Ribose import ATP-binding protein RbsA 2 from Burkholderia pseudomallei (strain 1710b).